The sequence spans 264 residues: Thymidylate synthase (264 aa).

DUMP is bound at residue R21. H51 provides a ligand contact to (6R)-5,10-methylene-5,6,7,8-tetrahydrofolate. 126–127 (RR) contacts dUMP. C146 serves as the catalytic Nucleophile. DUMP contacts are provided by residues 166 to 169 (RSCD), N177, and 207 to 209 (HLY). D169 is a binding site for (6R)-5,10-methylene-5,6,7,8-tetrahydrofolate. A263 serves as a coordination point for (6R)-5,10-methylene-5,6,7,8-tetrahydrofolate.

The protein belongs to the thymidylate synthase family. Bacterial-type ThyA subfamily. Homodimer.

It is found in the cytoplasm. The enzyme catalyses dUMP + (6R)-5,10-methylene-5,6,7,8-tetrahydrofolate = 7,8-dihydrofolate + dTMP. The protein operates within pyrimidine metabolism; dTTP biosynthesis. In terms of biological role, catalyzes the reductive methylation of 2'-deoxyuridine-5'-monophosphate (dUMP) to 2'-deoxythymidine-5'-monophosphate (dTMP) while utilizing 5,10-methylenetetrahydrofolate (mTHF) as the methyl donor and reductant in the reaction, yielding dihydrofolate (DHF) as a by-product. This enzymatic reaction provides an intracellular de novo source of dTMP, an essential precursor for DNA biosynthesis. This Escherichia coli O9:H4 (strain HS) protein is Thymidylate synthase.